The sequence spans 358 residues: CCAAT/enhancer-binding protein alpha (358 aa).

A disordered region spans residues 1 to 55; that stretch reads MESADFYEAEPRPPMSSHLQSPPHAPSSAAFGFPRGAGPAQPPAPPAAPEPLGGI. Residues 1-70 are required to repress E2F1:TFDP1-mediated transcription, to inhibit cell cycle and to induce adipocyte differentiation; that stretch reads MESADFYEAE…SIDISAYIDP (70 aa). Over residues 29 to 39 the composition is skewed to low complexity; the sequence is AAFGFPRGAGP. Positions 40–49 are enriched in pro residues; sequence AQPPAPPAAP. The tract at residues 54 to 72 is required for interaction with TRIB1; sequence GICEHETSIDISAYIDPAA. Residues 128–204 form a required to induce adipocyte differentiation region; sequence PPGYGCAAAG…HPPPAHLAAP (77 aa). N6-acetyllysine; alternate is present on lysine 161. Residue lysine 161 forms a Glycyl lysine isopeptide (Lys-Gly) (interchain with G-Cter in SUMO2); alternate linkage. 2 disordered regions span residues 178 to 201 and 217 to 291; these read LFPY…PAHL and TMHL…RRER. 2 stretches are compositionally biased toward pro residues: residues 181-199 and 224-238; these read YQPP…PPPA and HPTP…PHPA. Residues 182-198 form a required to functionally cooperate with SREBF1 in promoter activation region; the sequence is QPPPPPPPSHPHPHPPP. Serine 190 bears the Phosphoserine mark. Residues threonine 226 and threonine 230 each carry the phosphothreonine; by GSK3 modification. Serine 234 carries the post-translational modification Phosphoserine; by GSK3. A compositionally biased stretch (low complexity) spans 239-259; the sequence is PALGAAGLPGPGSALKGLGAA. Positions 244-358 are interaction with FOXO1; the sequence is AGLPGPGSAL…SLVKAMGNCA (115 aa). The segment covering 276–291 has biased composition (basic and acidic residues); sequence KSVDKNSNEYRVRRER. The bZIP domain maps to 282-345; the sequence is SNEYRVRRER…DTLRGIFRQL (64 aa). Residues 285 to 300 mediate DNA binding; sequence YRVRRERNNIAVRKSR. Residues 286–313 form a basic motif region; that stretch reads RVRRERNNIAVRKSRDKAKQRNVETQQK. The segment at 317-345 is leucine-zipper; it reads LTSDNDRLRKRVEQLSRELDTLRGIFRQL.

The protein belongs to the bZIP family. C/EBP subfamily. As to quaternary structure, binds DNA as a homodimer and as a heterodimer. Can form stable heterodimers with CEBPB, CEBPD, CEBPE and CEBPG. Interacts with PRDM16. Interacts with UBN1. Interacts with ZNF638; this interaction increases transcriptional activation. Interacts with the complex TFDP2:E2F1; the interaction prevents CEBPA binding to target gene promoters and represses its transcriptional activity. Interacts with RB1. Interacts (when phosphorylated at Ser-190) with CDK2, CDK4, E2F4 and SMARCA2. Interacts with SREBPF1. Interacts with FOXO1 (via the Fork-head domain); the interaction increases when FOXO1 is deacetylated. Interacts with SIX1. Interacts (via recognition sequence) with TRIB1. Interacts (via bZIP domain) with OVOL2 (via zinc-finger domains); the interaction inhibits the transcription factor activity of CEBPA and is required to repress adipogenesis. In terms of assembly, interacts with TAF1A and UBTF. Interacts with TAF1A and UBTF. Interacts with NPM1. As to quaternary structure, (Microbial infection) Interacts with HBV protein X. In terms of assembly, (Microbial infection) Interacts with Epstein-Barr virus lytic switch protein BZLF1; this interaction induces G1 cell cycle arrest. Phosphorylation at Ser-190 is required for interaction with CDK2, CDK4 and SWI/SNF complex leading to cell cycle inhibition. Dephosphorylated at Ser-190 by protein phosphatase 2A (PP2A) through PI3K/AKT signaling pathway regulation. Phosphorylation at Thr-226 and Thr-230 by GSK3 is constitutive in adipose tissue and lung. In liver, both Thr-226 and Thr-230 are phosphorylated only during feeding but not during fasting. Phosphorylation of the GSK3 consensus sites selectively decreases transactivation activity on IRE-controlled promoters. In terms of processing, sumoylated, sumoylation blocks the inhibitory effect on cell proliferation by disrupting the interaction with SMARCA2. Post-translationally, ubiquitinated by COP1 upon interaction with TRIB1.

It is found in the nucleus. The protein resides in the nucleolus. In terms of biological role, transcription factor that coordinates proliferation arrest and the differentiation of myeloid progenitors, adipocytes, hepatocytes, and cells of the lung and the placenta. Binds directly to the consensus DNA sequence 5'-T[TG]NNGNAA[TG]-3' acting as an activator on distinct target genes. During early embryogenesis, plays essential and redundant functions with CEBPB. Essential for the transition from common myeloid progenitors (CMP) to granulocyte/monocyte progenitors (GMP). Critical for the proper development of the liver and the lung. Necessary for terminal adipocyte differentiation, is required for postnatal maintenance of systemic energy homeostasis and lipid storage. To regulate these different processes at the proper moment and tissue, interplays with other transcription factors and modulators. Down-regulates the expression of genes that maintain cells in an undifferentiated and proliferative state through E2F1 repression, which is critical for its ability to induce adipocyte and granulocyte terminal differentiation. Reciprocally E2F1 blocks adipocyte differentiation by binding to specific promoters and repressing CEBPA binding to its target gene promoters. Proliferation arrest also depends on a functional binding to SWI/SNF complex. In liver, regulates gluconeogenesis and lipogenesis through different mechanisms. To regulate gluconeogenesis, functionally cooperates with FOXO1 binding to IRE-controlled promoters and regulating the expression of target genes such as PCK1 or G6PC1. To modulate lipogenesis, interacts and transcriptionally synergizes with SREBF1 in promoter activation of specific lipogenic target genes such as ACAS2. In adipose tissue, seems to act as FOXO1 coactivator accessing to ADIPOQ promoter through FOXO1 binding sites. Can act as dominant-negative. Binds DNA and have transctivation activity, even if much less efficiently than isoform 2. Does not inhibit cell proliferation. Functionally, directly and specifically enhances ribosomal DNA transcription interacting with RNA polymerase I-specific cofactors and inducing histone acetylation. The protein is CCAAT/enhancer-binding protein alpha of Homo sapiens (Human).